We begin with the raw amino-acid sequence, 163 residues long: SKP1-like protein 4 (163 aa).

The interaction with the F-box domain of F-box proteins stretch occupies residues isoleucine 105–glutamate 163.

This sequence belongs to the SKP1 family. As to quaternary structure, part of a SCF (SKP1-cullin-F-box) protein ligase complex. Interacts with At1g56610, At1g67340, At3g62230, At3g59000, At4g27050, At1g55000, SKIP16 and SKIP32. As to expression, mostly expressed in inflorescence and siliques, and, to a lower extent, in seedlings, roots, and stems.

Its subcellular location is the nucleus. The protein operates within protein modification; protein ubiquitination. Involved in ubiquitination and subsequent proteasomal degradation of target proteins. Together with CUL1, RBX1 and a F-box protein, it forms a SCF E3 ubiquitin ligase complex. The functional specificity of this complex depends on the type of F-box protein. In the SCF complex, it serves as an adapter that links the F-box protein to CUL1. This chain is SKP1-like protein 4 (ASK4), found in Arabidopsis thaliana (Mouse-ear cress).